The following is a 124-amino-acid chain: Protein TAR1 (124 aa).

The tract at residues 80–124 is disordered; the sequence is KNRTPRHTGFSPSMTSCSKEHRQGTAPKLPSPNYNSGTEGTRFQI. Residues 111-124 are compositionally biased toward polar residues; that stretch reads PNYNSGTEGTRFQI.

Its subcellular location is the mitochondrion. Functionally, may be involved in mtDNA stability or mitochondrial gene expression regulation at the post-transcriptional level. The protein is Protein TAR1 (TAR1) of Saccharomyces cerevisiae (strain ATCC 204508 / S288c) (Baker's yeast).